A 304-amino-acid chain; its full sequence is Dihydroorotate dehydrogenase B (NAD(+)), catalytic subunit (304 aa).

FMN contacts are provided by residues S22 and 46–47 (KG). Substrate-binding positions include K46 and 70 to 74 (NSIGL). FMN contacts are provided by N100 and N128. Residue N128 coordinates substrate. The active-site Nucleophile is C131. 2 residues coordinate FMN: K166 and I192. Residue 193–194 (NT) coordinates substrate. Residues G218, 244 to 245 (GG), and 266 to 267 (GT) contribute to the FMN site.

Belongs to the dihydroorotate dehydrogenase family. Type 1 subfamily. In terms of assembly, heterotetramer of 2 PyrK and 2 PyrD type B subunits. However, the metal reductase complex seems to be composed of a heterooctamer of 4 PyrK and 4 PyrD subunits. FMN serves as cofactor.

The protein resides in the cytoplasm. The catalysed reaction is (S)-dihydroorotate + NAD(+) = orotate + NADH + H(+). The protein operates within pyrimidine metabolism; UMP biosynthesis via de novo pathway; orotate from (S)-dihydroorotate (NAD(+) route): step 1/1. Functionally, catalyzes the conversion of dihydroorotate to orotate with NAD(+) as electron acceptor. In terms of biological role, together with PyrK, also forms a metal reductase complex able to reduce Fe(III)-chelates to Fe(II)-chelates, as well as soluble Cr(VI) and U(VI), using NADH as electron donor. To a lesser extent, can also use NADPH as an electron donor. Is unable to reduce riboflavin and FMN with NADH as electron donor. May have an in vivo role in metal reduction in D.reducens, which is an organism capable of reducing contaminant heavy metals and radionuclides. In Desulforamulus reducens (strain ATCC BAA-1160 / DSM 100696 / MI-1) (Desulfotomaculum reducens), this protein is Dihydroorotate dehydrogenase B (NAD(+)), catalytic subunit (pyrD).